We begin with the raw amino-acid sequence, 351 residues long: Anthranilate phosphoribosyltransferase (351 aa).

5-phospho-alpha-D-ribose 1-diphosphate-binding positions include G80, 83–84, T88, 90–93, 108–116, and S120; these read GD, NVST, and KHGNRSVTS. Residue G80 participates in anthranilate binding. S92 is a binding site for Mg(2+). Residue N111 coordinates anthranilate. Residue R166 coordinates anthranilate. The Mg(2+) site is built by D229 and E230.

This sequence belongs to the anthranilate phosphoribosyltransferase family. In terms of assembly, homodimer. Mg(2+) serves as cofactor.

The enzyme catalyses N-(5-phospho-beta-D-ribosyl)anthranilate + diphosphate = 5-phospho-alpha-D-ribose 1-diphosphate + anthranilate. It functions in the pathway amino-acid biosynthesis; L-tryptophan biosynthesis; L-tryptophan from chorismate: step 2/5. Functionally, catalyzes the transfer of the phosphoribosyl group of 5-phosphorylribose-1-pyrophosphate (PRPP) to anthranilate to yield N-(5'-phosphoribosyl)-anthranilate (PRA). This chain is Anthranilate phosphoribosyltransferase, found in Prosthecochloris aestuarii (strain DSM 271 / SK 413).